Here is a 207-residue protein sequence, read N- to C-terminus: MRAIRMLLVSALTLGSVTAYAGEQDVQRLTQLLEKSQTIEANFSQLTLGADGTSLQETSGKMTVKRPGLFYWHTDAPQEQVVVSDGKNVTLWDPDLEQATIKKLDVRLNQTPALLLSGDVSKISQSFDIASKEQGEVMDFTLKPKTKDTLFDSLRVSFRKGLINDMQLIDSVGQRTNILFNGVKANQAVPDSKFKFDIPKGADVIKE.

The signal sequence occupies residues M1–A21.

It belongs to the LolA family. In terms of assembly, monomer.

The protein localises to the periplasm. Participates in the translocation of lipoproteins from the inner membrane to the outer membrane. Only forms a complex with a lipoprotein if the residue after the N-terminal Cys is not an aspartate (The Asp acts as a targeting signal to indicate that the lipoprotein should stay in the inner membrane). This chain is Outer-membrane lipoprotein carrier protein, found in Pseudomonas putida (strain ATCC 47054 / DSM 6125 / CFBP 8728 / NCIMB 11950 / KT2440).